Consider the following 600-residue polypeptide: Putative DNA 3'-5' helicase Rad25 (600 aa).

A Helicase ATP-binding domain is found at 253–402 (VDRFEDASAG…DIYTLVGRPI (150 aa)). ATP is bound at residue 266-273 (GPPGSGKT). A DEAH box motif is present at residues 356–359 (DEVH). The region spanning 457-600 (EIEHLVDQHG…VTESDASHSP (144 aa)) is the Helicase C-terminal domain. The interval 569–600 (RGTEEEDHARSRMRHLSTKGVRVTESDASHSP) is disordered. Positions 590–600 (RVTESDASHSP) are enriched in basic and acidic residues.

It belongs to the helicase family. RAD25/XPB subfamily.

The enzyme catalyses Couples ATP hydrolysis with the unwinding of duplex DNA by translocating in the 3'-5' direction.. The catalysed reaction is ATP + H2O = ADP + phosphate + H(+). The protein is Putative DNA 3'-5' helicase Rad25 of Halobacterium salinarum (strain ATCC 700922 / JCM 11081 / NRC-1) (Halobacterium halobium).